A 649-amino-acid polypeptide reads, in one-letter code: Threonine--tRNA ligase (649 aa).

In terms of domain architecture, TGS spans 1-61 (MIKITFPDGA…TQDGSIEIVT (61 aa)). The catalytic stretch occupies residues 242–540 (DHRKLGKELD…LIETYKGAFP (299 aa)). Residues Cys-336, His-387, and His-517 each contribute to the Zn(2+) site.

This sequence belongs to the class-II aminoacyl-tRNA synthetase family. In terms of assembly, homodimer. Requires Zn(2+) as cofactor.

The protein resides in the cytoplasm. It carries out the reaction tRNA(Thr) + L-threonine + ATP = L-threonyl-tRNA(Thr) + AMP + diphosphate + H(+). In terms of biological role, catalyzes the attachment of threonine to tRNA(Thr) in a two-step reaction: L-threonine is first activated by ATP to form Thr-AMP and then transferred to the acceptor end of tRNA(Thr). Also edits incorrectly charged L-seryl-tRNA(Thr). The sequence is that of Threonine--tRNA ligase from Streptococcus mutans serotype c (strain ATCC 700610 / UA159).